Consider the following 306-residue polypeptide: Pyridoxal 5'-phosphate synthase subunit SNZERR (306 aa).

Position 34 (Asp-34) interacts with D-ribose 5-phosphate. Catalysis depends on Lys-91, which acts as the Schiff-base intermediate with D-ribose 5-phosphate. A D-ribose 5-phosphate-binding site is contributed by Gly-163. Arg-175 serves as a coordination point for D-glyceraldehyde 3-phosphate. D-ribose 5-phosphate contacts are provided by residues Gly-224 and 245–246 (GS).

Belongs to the PdxS/SNZ family.

It carries out the reaction aldehydo-D-ribose 5-phosphate + D-glyceraldehyde 3-phosphate + L-glutamine = pyridoxal 5'-phosphate + L-glutamate + phosphate + 3 H2O + H(+). It functions in the pathway cofactor biosynthesis; pyridoxal 5'-phosphate biosynthesis. In terms of biological role, catalyzes the formation of pyridoxal 5'-phosphate from ribose 5-phosphate (RBP), glyceraldehyde 3-phosphate (G3P) and ammonia. The ammonia is provided by PDX2. Can also use ribulose 5-phosphate and dihydroxyacetone phosphate as substrates, resulting from enzyme-catalyzed isomerization of RBP and G3P, respectively. Also plays an indirect role in resistance to singlet oxygen-generating photosensitizers. This Suberites domuncula (Sponge) protein is Pyridoxal 5'-phosphate synthase subunit SNZERR (SNZERR).